We begin with the raw amino-acid sequence, 122 residues long: S-protein homolog 23 (122 aa).

The N-terminal stretch at 1–20 (MQNLSILLVCSFCILGHVSS) is a signal peptide. N-linked (GlcNAc...) asparagine glycosylation occurs at N86.

This sequence belongs to the plant self-incompatibility (S1) protein family.

It is found in the secreted. The sequence is that of S-protein homolog 23 from Arabidopsis thaliana (Mouse-ear cress).